The primary structure comprises 533 residues: Probable metalloreductase AIM14 (533 aa).

7 helical membrane-spanning segments follow: residues 17–37, 61–81, 102–122, 136–156, 168–188, 198–218, and 220–240; these read IPYG…LIGA, GGSP…PFVH, VLAT…PGYV, SLCL…ALDS, IPNL…LLSV, SFYL…AYHA, and PGVF…YILS. One can recognise a Ferric oxidoreductase domain in the interval 96–213; sequence LGRLSYVLAT…IIGAWVFVFL (118 aa). An FAD-binding FR-type domain is found at 240-366; it reads SKTVPARGVE…GGSGLSYALP (127 aa).

It belongs to the ferric reductase (FRE) family. AIM14 subfamily.

The protein resides in the membrane. In terms of biological role, probable cell surface metalloreductase. May be involved in iron or copper homeostasis. The sequence is that of Probable metalloreductase AIM14 (AIM14) from Lachancea thermotolerans (strain ATCC 56472 / CBS 6340 / NRRL Y-8284) (Yeast).